We begin with the raw amino-acid sequence, 492 residues long: Signal transduction histidine-protein kinase/phosphatase MprB (492 aa).

Topologically, residues 1-27 (MAFPPNSWRPTGPLPTSSLSLRWRVMM) are cytoplasmic. A helical membrane pass occupies residues 28–48 (LAMSMVALVVVLMAVAVYAVV). Residues 49 to 165 (SRALYDDLDN…TVQVLRRLGT (117 aa)) are Extracellular-facing. Residues 166 to 186 (VLLIVGGIGVAVAAIAGGAVA) form a helical membrane-spanning segment. Residues 187–239 (RAGLRPVGRLTEAAERVARTDDLRPIPVVGSDELARLTEAFNMMLRALAESRE) enclose the HAMP domain. Residues 187-492 (RAGLRPVGRL…DRGGHTVATE (306 aa)) lie on the Cytoplasmic side of the membrane. In terms of domain architecture, Histidine kinase spans 247–467 (DAGHELRTPL…SVHMLLPGQR (221 aa)). His250 carries the phosphohistidine; by autocatalysis modification. The interval 470 to 492 (DPGATRSAEGFVDDRGGHTVATE) is disordered.

The cofactor is Mg(2+). Requires Mn(2+) as cofactor. Autophosphorylated.

The protein resides in the cell membrane. It carries out the reaction ATP + protein L-histidine = ADP + protein N-phospho-L-histidine.. Its function is as follows. Member of the two-component regulatory system MprB/MprA which contributes to maintaining a balance among several systems involved in stress resistance and is required for establishment and maintenance of persistent infection in the host. In response to environmental signals MprB acts both as a membrane-associated protein kinase that undergoes autophosphorylation and subsequently transfers the phosphate to MprA, and a protein phosphatase that dephosphorylates phospho-MprA. The chain is Signal transduction histidine-protein kinase/phosphatase MprB (mprB) from Mycolicibacterium smegmatis (strain ATCC 700084 / mc(2)155) (Mycobacterium smegmatis).